We begin with the raw amino-acid sequence, 451 residues long: Interferon regulatory factor 4 (451 aa).

Positions 21–129 (NGKLRQWLID…DPYKVYRIVP (109 aa)) form a DNA-binding region, IRF tryptophan pentad repeat. Residues serine 447 and serine 448 each carry the phosphoserine; by ROCK2 modification.

This sequence belongs to the IRF family. Interacts with the BATF-JUNB heterodimer. Interacts with BATF (via bZIP domain); the interaction is direct. Interacts with SPIB. Interacts with DEF6. Directly interacts with NLRP3 in the nucleus of Th2 cells; this interaction enhances IRF4 ability to bind to the IL4 promoter and is required for optimal IRF4-dependent IL4 transcription. Interacts with SPI1. Phosphorylation by ROCK2 regulates IL-17 and IL-21 production. In terms of tissue distribution, lymphoid cells.

It is found in the nucleus. The protein localises to the cytoplasm. Transcriptional activator. Binds to the interferon-stimulated response element (ISRE) of the MHC class I promoter. Binds the immunoglobulin lambda light chain enhancer, together with PU.1. Probably plays a role in ISRE-targeted signal transduction mechanisms specific to lymphoid cells. Involved in CD8(+) dendritic cell differentiation by forming a complex with the BATF-JUNB heterodimer in immune cells, leading to recognition of AICE sequence (5'-TGAnTCA/GAAA-3'), an immune-specific regulatory element, followed by cooperative binding of BATF and IRF4 and activation of genes. In Homo sapiens (Human), this protein is Interferon regulatory factor 4.